The following is a 380-amino-acid chain: Cytochrome b (380 aa).

The next 4 helical transmembrane spans lie at 33–53, 77–98, 113–133, and 178–198; these read FGSLLGLCLFSQILTGLFLAM, WFIRSLHANGASFFFICIYLHI, WTIGVVLLGLVMATAFVGYVL, and FFTFHFLLPFIIAAATLVHLL. Heme b contacts are provided by histidine 83 and histidine 97. Heme b is bound by residues histidine 182 and histidine 196. Histidine 201 lines the a ubiquinone pocket. 4 helical membrane-spanning segments follow: residues 226–246, 288–308, 320–340, and 347–367; these read YKDLLGFLALLSALTSLALFS, LGGVLALLFSILVLVLVPILH, LTQTLFWTLVADMLILTWIGG, and FVIIGQVASTLYFLLFLVLAP.

This sequence belongs to the cytochrome b family. The cytochrome bc1 complex contains 3 respiratory subunits (MT-CYB, CYC1 and UQCRFS1), 2 core proteins (UQCRC1 and UQCRC2) and probably 6 low-molecular weight proteins. The cofactor is heme b.

It localises to the mitochondrion inner membrane. Component of the ubiquinol-cytochrome c reductase complex (complex III or cytochrome b-c1 complex) that is part of the mitochondrial respiratory chain. The b-c1 complex mediates electron transfer from ubiquinol to cytochrome c. Contributes to the generation of a proton gradient across the mitochondrial membrane that is then used for ATP synthesis. This chain is Cytochrome b (mt-cyb), found in Lampris guttatus (Opah).